We begin with the raw amino-acid sequence, 383 residues long: uncharacterized protein (383 aa).

Positions 12, 18, 21, and 88 each coordinate [4Fe-4S] cluster. S-adenosyl-L-methionine contacts are provided by Q219, F246, E267, and D314. Residue C341 is the Nucleophile of the active site.

It belongs to the class I-like SAM-binding methyltransferase superfamily. RNA M5U methyltransferase family.

This is an uncharacterized protein from Protochlamydia amoebophila (strain UWE25).